Consider the following 513-residue polypeptide: Serine/threonine-protein phosphatase T (513 aa).

3 TPR repeats span residues 12–45, 46–79, and 80–113; these read ALER…DSTQ, SIYF…DPKN, and IKAY…KPND. Positions 188-513 are catalytic; sequence KNMSQEFISK…MAYSNGGFGL (326 aa). Positions 249, 251, 278, and 310 each coordinate Mn(2+). His-311 serves as the catalytic Proton donor/acceptor. Positions 359 and 434 each coordinate Mn(2+).

The protein belongs to the PPP phosphatase family. PP-5 (PP-T) subfamily. As to quaternary structure, interacts (via TPR repeats) with HSP82 (via C-terminal MEEVD pentapeptide). Mg(2+) serves as cofactor. It depends on Mn(2+) as a cofactor.

Its subcellular location is the nucleus. The catalysed reaction is O-phospho-L-seryl-[protein] + H2O = L-seryl-[protein] + phosphate. It carries out the reaction O-phospho-L-threonyl-[protein] + H2O = L-threonyl-[protein] + phosphate. Stimulated by arachidonic acid and other unsaturated fatty acids, and by arachidoyl coenzyme A. Functionally, protein phosphatase that specifically binds to and dephosphorylates the molecular chaperone Hsp90 (HSC82 and HSP82). Dephosphorylation positively regulates the Hsp90 chaperone machinery. The chain is Serine/threonine-protein phosphatase T (PPT1) from Saccharomyces cerevisiae (strain ATCC 204508 / S288c) (Baker's yeast).